We begin with the raw amino-acid sequence, 118 residues long: Putative pterin-4-alpha-carbinolamine dehydratase (118 aa).

This sequence belongs to the pterin-4-alpha-carbinolamine dehydratase family.

It carries out the reaction (4aS,6R)-4a-hydroxy-L-erythro-5,6,7,8-tetrahydrobiopterin = (6R)-L-erythro-6,7-dihydrobiopterin + H2O. The protein is Putative pterin-4-alpha-carbinolamine dehydratase of Pseudomonas fluorescens (strain SBW25).